The primary structure comprises 415 residues: D-serine dehydratase (415 aa).

Lys-68 carries the post-translational modification N6-(pyridoxal phosphate)lysine. 5 residues coordinate pyridoxal 5'-phosphate: Tyr-204, Tyr-211, Thr-253, Gly-279, and Asn-280. Zn(2+)-binding residues include His-385 and Cys-387.

This sequence belongs to the DSD1 family. As to quaternary structure, homodimer. The cofactor is pyridoxal 5'-phosphate. Requires Zn(2+) as cofactor.

The protein resides in the cytoplasm. Its subcellular location is the nucleus. The catalysed reaction is D-serine = pyruvate + NH4(+). Its function is as follows. Catalyzes the conversion of D-serine to pyruvate and ammonia. May play a role in D-serine detoxification. This is D-serine dehydratase from Schizosaccharomyces pombe (strain 972 / ATCC 24843) (Fission yeast).